The sequence spans 347 residues: CCN family member 2 (347 aa).

The signal sequence occupies residues 1-24 (MLASVAGPVSLALVLLLCTRPATG). The IGFBP N-terminal domain occupies 25–96 (QDCSAQCQCA…NRKIGVCTAK (72 aa)). 6 cysteine pairs are disulfide-bonded: C27/C52, C31/C54, C33/C55, C41/C58, C66/C80, and C72/C93. In terms of domain architecture, VWFC spans 99–165 (APCVFGGSVY…GKCCEEWVCD (67 aa)). The region spanning 196 to 241 (NCLVQTTEWSACSKTCGMGISTRVTNDNTFCRLEKQSRLCMVRPCE) is the TSP type-1 domain. The interval 245 to 347 (EENIKKGKKC…YYRKMYGDMA (103 aa)) is heparin-binding. 5 disulfides stabilise this stretch: C254–C291, C271–C305, C282–C321, C285–C323, and C290–C327. The CTCK domain maps to 254–328 (CIRTPKIAKP…KTCACHYNCP (75 aa)).

This sequence belongs to the CCN family. In terms of assembly, monomer. Interacts with TSKU.

The protein resides in the secreted. It localises to the extracellular space. Its subcellular location is the extracellular matrix. In terms of biological role, major connective tissue mitoattractant secreted by vascular endothelial cells. Promotes proliferation and differentiation of chondrocytes. Is involved in the stimulation of osteoblast differentiation and has a critical role in osteogenesis. Mediates heparin- and divalent cation-dependent cell adhesion in many cell types including fibroblasts, myofibroblasts, endothelial and epithelial cells. Enhances fibroblast growth factor-induced DNA synthesis. The sequence is that of CCN family member 2 from Rattus norvegicus (Rat).